The primary structure comprises 1071 residues: Carbamoyl phosphate synthase large chain (1071 aa).

The tract at residues 1–399 is carboxyphosphate synthetic domain; the sequence is MPKREDIKKV…SLLKAFKSLD (399 aa). Arginine 129, arginine 169, glycine 175, glycine 176, glutamate 208, valine 210, glutamate 215, glycine 241, valine 242, histidine 243, glutamine 284, and glutamate 296 together coordinate ATP. The ATP-grasp 1 domain occupies 133–325; that stretch reads KETMLRIGEK…IARVTAKIAI (193 aa). Mg(2+) is bound by residues glutamine 284, glutamate 296, and asparagine 298. Mn(2+) is bound by residues glutamine 284, glutamate 296, and asparagine 298. An oligomerization domain region spans residues 400 to 540; it reads IDNQLGNKHW…YSTYEDSCET (141 aa). Residues 541–932 are carbamoyl phosphate synthetic domain; it reads NATTDKKKIL…YKAELAADNV (392 aa). Residues 673 to 864 enclose the ATP-grasp 2 domain; sequence YILMKELGVP…LAKIAAKVIA (192 aa). ATP is bound by residues arginine 709, aspartate 748, leucine 750, glutamate 755, glycine 780, valine 781, histidine 782, serine 783, glutamine 823, and glutamate 835. Residues glutamine 823, glutamate 835, and asparagine 837 each contribute to the Mg(2+) site. Mn(2+) is bound by residues glutamine 823, glutamate 835, and asparagine 837. Positions 931 to 1071 constitute an MGS-like domain; that stretch reads NVLPLTGKVF…INEYHKEMEN (141 aa). The interval 933-1071 is allosteric domain; the sequence is LPLTGKVFLS…INEYHKEMEN (139 aa).

This sequence belongs to the CarB family. As to quaternary structure, composed of two chains; the small (or glutamine) chain promotes the hydrolysis of glutamine to ammonia, which is used by the large (or ammonia) chain to synthesize carbamoyl phosphate. Tetramer of heterodimers (alpha,beta)4. Requires Mg(2+) as cofactor. Mn(2+) is required as a cofactor.

It carries out the reaction hydrogencarbonate + L-glutamine + 2 ATP + H2O = carbamoyl phosphate + L-glutamate + 2 ADP + phosphate + 2 H(+). It catalyses the reaction hydrogencarbonate + NH4(+) + 2 ATP = carbamoyl phosphate + 2 ADP + phosphate + 2 H(+). Its pathway is amino-acid biosynthesis; L-arginine biosynthesis; carbamoyl phosphate from bicarbonate: step 1/1. It participates in pyrimidine metabolism; UMP biosynthesis via de novo pathway; (S)-dihydroorotate from bicarbonate: step 1/3. In terms of biological role, large subunit of the glutamine-dependent carbamoyl phosphate synthetase (CPSase). CPSase catalyzes the formation of carbamoyl phosphate from the ammonia moiety of glutamine, carbonate, and phosphate donated by ATP, constituting the first step of 2 biosynthetic pathways, one leading to arginine and/or urea and the other to pyrimidine nucleotides. The large subunit (synthetase) binds the substrates ammonia (free or transferred from glutamine from the small subunit), hydrogencarbonate and ATP and carries out an ATP-coupled ligase reaction, activating hydrogencarbonate by forming carboxy phosphate which reacts with ammonia to form carbamoyl phosphate. The polypeptide is Carbamoyl phosphate synthase large chain (Methanosarcina barkeri (strain Fusaro / DSM 804)).